Consider the following 469-residue polypeptide: Arginine biosynthesis bifunctional protein ArgJ, mitochondrial (469 aa).

The substrate site is built by Thr-199, Lys-228, Thr-239, Glu-325, Asn-464, and Thr-469. The active-site Nucleophile is Thr-239.

This sequence belongs to the ArgJ family. In terms of assembly, heterodimer of an alpha and a beta chain. Post-translationally, the alpha and beta chains are autoproteolytically processed from a single precursor protein within the mitochondrion.

It localises to the mitochondrion matrix. The enzyme catalyses N(2)-acetyl-L-ornithine + L-glutamate = N-acetyl-L-glutamate + L-ornithine. The catalysed reaction is L-glutamate + acetyl-CoA = N-acetyl-L-glutamate + CoA + H(+). Its pathway is amino-acid biosynthesis; L-arginine biosynthesis; L-ornithine and N-acetyl-L-glutamate from L-glutamate and N(2)-acetyl-L-ornithine (cyclic): step 1/1. It functions in the pathway amino-acid biosynthesis; L-arginine biosynthesis; N(2)-acetyl-L-ornithine from L-glutamate: step 1/4. Catalyzes two activities which are involved in the cyclic version of arginine biosynthesis: the synthesis of acetylglutamate from glutamate and acetyl-CoA, and of ornithine by transacetylation between acetylornithine and glutamate. The polypeptide is Arginine biosynthesis bifunctional protein ArgJ, mitochondrial (Neurospora crassa (strain ATCC 24698 / 74-OR23-1A / CBS 708.71 / DSM 1257 / FGSC 987)).